A 518-amino-acid chain; its full sequence is 3-octaprenyl-4-hydroxybenzoate carboxy-lyase (518 aa).

A Mn(2+)-binding site is contributed by Asn177. Residues 180 to 182 (IYR), 194 to 196 (RWL), and 199 to 200 (RG) each bind prenylated FMN. Glu243 contacts Mn(2+). Asp318 acts as the Proton donor in catalysis.

The protein belongs to the UbiD family. Homohexamer. It depends on prenylated FMN as a cofactor. The cofactor is Mn(2+).

It is found in the cell membrane. It carries out the reaction a 4-hydroxy-3-(all-trans-polyprenyl)benzoate + H(+) = a 2-(all-trans-polyprenyl)phenol + CO2. Its pathway is cofactor biosynthesis; ubiquinone biosynthesis. In terms of biological role, catalyzes the decarboxylation of 3-octaprenyl-4-hydroxy benzoate to 2-octaprenylphenol, an intermediate step in ubiquinone biosynthesis. The protein is 3-octaprenyl-4-hydroxybenzoate carboxy-lyase of Burkholderia lata (strain ATCC 17760 / DSM 23089 / LMG 22485 / NCIMB 9086 / R18194 / 383).